Here is a 66-residue protein sequence, read N- to C-terminus: Phylloseptin-S3 (66 aa).

The N-terminal stretch at 1–22 is a signal peptide; it reads MAFLKKSLFLVLFLGLVSLSIC. A propeptide spanning residues 23 to 46 is cleaved from the precursor; it reads EEEKRETEEEEHDQEEDDKSEEKR. Positions 25-44 are disordered; sequence EKRETEEEEHDQEEDDKSEE. The segment covering 30 to 41 has biased composition (acidic residues); sequence EEEEHDQEEDDK. F65 bears the Phenylalanine amide mark.

It belongs to the frog skin active peptide (FSAP) family. Phylloseptin subfamily. In terms of tissue distribution, expressed by the skin glands.

The protein resides in the secreted. Its subcellular location is the target cell membrane. Its function is as follows. Antimicrobial peptide with activity against the Gram-positive S.pyogenes (MIC=12.5 uM), but not against all other bacteria tested (both Gram-positive and Gram-negative). Does not show activity against fungi, and against Leishmania species. This chain is Phylloseptin-S3, found in Phyllomedusa sauvagei (Sauvage's leaf frog).